We begin with the raw amino-acid sequence, 166 residues long: Large ribosomal subunit protein uL10 (166 aa).

Belongs to the universal ribosomal protein uL10 family. In terms of assembly, part of the ribosomal stalk of the 50S ribosomal subunit. The N-terminus interacts with L11 and the large rRNA to form the base of the stalk. The C-terminus forms an elongated spine to which L12 dimers bind in a sequential fashion forming a multimeric L10(L12)X complex.

Forms part of the ribosomal stalk, playing a central role in the interaction of the ribosome with GTP-bound translation factors. This Shewanella baltica (strain OS223) protein is Large ribosomal subunit protein uL10.